The sequence spans 391 residues: Processive diacylglycerol beta-glucosyltransferase (391 aa).

This sequence belongs to the glycosyltransferase 28 family. UgtP subfamily.

It localises to the cell membrane. The catalysed reaction is a 1,2-diacyl-3-O-(beta-D-glucopyranosyl)-sn-glycerol + UDP-alpha-D-glucose = a 1,2-diacyl-3-O-(beta-D-Glc-(1-&gt;6)-beta-D-Glc)-sn-glycerol + UDP + H(+). The enzyme catalyses a 1,2-diacyl-sn-glycerol + UDP-alpha-D-glucose = a 1,2-diacyl-3-O-(beta-D-glucopyranosyl)-sn-glycerol + UDP + H(+). The protein operates within glycolipid metabolism; diglucosyl-diacylglycerol biosynthesis. Processive glucosyltransferase involved in the biosynthesis of both the bilayer- and non-bilayer-forming membrane glucolipids. Is able to successively transfer two glucosyl residues to diacylglycerol (DAG), thereby catalyzing the formation of beta-monoglucosyl-DAG (3-O-(beta-D-glucopyranosyl)-1,2-diacyl-sn-glycerol) and beta-diglucosyl-DAG (3-O-(beta-D-glucopyranosyl-beta-(1-&gt;6)-D-glucopyranosyl)-1,2-diacyl-sn-glycerol). Beta-diglucosyl-DAG is the predominant glycolipid found in Bacillales and is also used as a membrane anchor for lipoteichoic acid (LTA). The polypeptide is Processive diacylglycerol beta-glucosyltransferase (Staphylococcus epidermidis (strain ATCC 12228 / FDA PCI 1200)).